The following is a 291-amino-acid chain: Kidney mitochondrial carrier protein 1 (291 aa).

Ser2 carries the N-acetylserine modification. Solcar repeat units follow at residues 7–96 (KPFV…LKRL), 104–189 (ETLL…TKKH), and 198–289 (DTVS…LKKL). 6 helical membrane-spanning segments follow: residues 9–26 (FVYG…TFPI), 71–89 (GIAP…KIGT), 106–124 (LLIN…SAIA), 164–183 (GVSL…LPVY), 204–224 (FLSS…VDVV), and 264–283 (GFWP…FLTY).

It belongs to the mitochondrial carrier (TC 2.A.29) family. As to quaternary structure, interacts with VDAC1.

Its subcellular location is the mitochondrion inner membrane. It carries out the reaction sulfite(in) + sulfate(out) = sulfite(out) + sulfate(in). The catalysed reaction is thiosulfate(in) + sulfate(out) = thiosulfate(out) + sulfate(in). The enzyme catalyses sulfate(out) + phosphate(in) = sulfate(in) + phosphate(out). It catalyses the reaction oxalate(in) + sulfate(out) = oxalate(out) + sulfate(in). It carries out the reaction malonate(in) + sulfate(out) = malonate(out) + sulfate(in). The catalysed reaction is maleate(in) + sulfate(out) = maleate(out) + sulfate(in). The enzyme catalyses (S)-malate(in) + sulfate(out) = (S)-malate(out) + sulfate(in). It catalyses the reaction (3S)-citramalate(in) + sulfate(out) = (3S)-citramalate(out) + sulfate(in). It carries out the reaction (3R)-citramalate(in) + sulfate(out) = (3R)-citramalate(out) + sulfate(in). The catalysed reaction is sulfate(out) + succinate(in) = sulfate(in) + succinate(out). The enzyme catalyses (S,S)-tartrate(in) + sulfate(out) = (S,S)-tartrate(out) + sulfate(in). It catalyses the reaction (2R,3R)-tartrate(in) + sulfate(out) = (2R,3R)-tartrate(out) + sulfate(in). It carries out the reaction D-aspartate(in) + sulfate(out) = D-aspartate(out) + sulfate(in). The catalysed reaction is L-aspartate(in) + sulfate(out) = L-aspartate(out) + sulfate(in). The enzyme catalyses sulfate(in) = sulfate(out). It catalyses the reaction phosphate(in) = phosphate(out). It carries out the reaction (S)-malate(out) = (S)-malate(in). Antiporter that transports inorganic anions (sulfate, sulfite, thiosulfate and phosphate) and, to a lesser extent, a variety of dicarboxylates (e.g. malonate, malate and citramalate) and, even more so, aspartate. The sulfate/sulfate exchange is much higher than the phosphate/phosphate and malate/malate exchanges. The transport affinities is higher for sulfate and thiosulfate than for any other substrate. May catalyze the export of sulfite and thiosulfate (the hydrogen sulfide degradation products) from the mitochondria, thereby modulating the level of the hydrogen sulfide. Also may mediate a very low unidirectional transport of sulfate, phosphate and (S)-malate. This chain is Kidney mitochondrial carrier protein 1, found in Rattus norvegicus (Rat).